The primary structure comprises 246 residues: 1-(5-phosphoribosyl)-5-[(5-phosphoribosylamino)methylideneamino] imidazole-4-carboxamide isomerase (246 aa).

Aspartate 8 functions as the Proton acceptor in the catalytic mechanism. Aspartate 131 acts as the Proton donor in catalysis.

Belongs to the HisA/HisF family.

The protein localises to the cytoplasm. It catalyses the reaction 1-(5-phospho-beta-D-ribosyl)-5-[(5-phospho-beta-D-ribosylamino)methylideneamino]imidazole-4-carboxamide = 5-[(5-phospho-1-deoxy-D-ribulos-1-ylimino)methylamino]-1-(5-phospho-beta-D-ribosyl)imidazole-4-carboxamide. It participates in amino-acid biosynthesis; L-histidine biosynthesis; L-histidine from 5-phospho-alpha-D-ribose 1-diphosphate: step 4/9. The sequence is that of 1-(5-phosphoribosyl)-5-[(5-phosphoribosylamino)methylideneamino] imidazole-4-carboxamide isomerase from Polaromonas sp. (strain JS666 / ATCC BAA-500).